A 442-amino-acid polypeptide reads, in one-letter code: Trigger factor (442 aa).

A PPIase FKBP-type domain is found at 163 to 248 (YDRVTINYCI…IIKIEKKQEL (86 aa)).

Belongs to the FKBP-type PPIase family. Tig subfamily.

It is found in the cytoplasm. The enzyme catalyses [protein]-peptidylproline (omega=180) = [protein]-peptidylproline (omega=0). Functionally, involved in protein export. Acts as a chaperone by maintaining the newly synthesized protein in an open conformation. Functions as a peptidyl-prolyl cis-trans isomerase. This is Trigger factor from Buchnera aphidicola subsp. Acyrthosiphon pisum (strain Tuc7).